The sequence spans 481 residues: Autolysin (481 aa).

The 136-residue stretch at 7–142 (KNEFIERLKT…LQDDNMLMIS (136 aa)) folds into the Peptidase C51 domain. The 126-residue stretch at 198–323 (SNPKGIVIHN…NEFTSTSCPH (126 aa)) folds into the N-acetylmuramoyl-L-alanine amidase domain. The 69-residue stretch at 398-466 (EESARFTNGN…YLPIRTWNGS (69 aa)) folds into the SH3b domain.

Belongs to the N-acetylmuramoyl-L-alanine amidase 2 family.

It localises to the secreted. It catalyses the reaction Hydrolyzes the link between N-acetylmuramoyl residues and L-amino acid residues in certain cell-wall glycopeptides.. Autolysins are involved in some important biological processes such as cell separation, cell-wall turnover, competence for genetic transformation, formation of the flagella and sporulation. Autolysin strictly depends on the presence of choline-containing cell walls for activity. The sequence is that of Autolysin (lytA) from Staphylococcus aureus.